Consider the following 424-residue polypeptide: L-threonine:uridine-5'-aldehyde transaldolase (424 aa).

Residue K235 is modified to N6-(pyridoxal phosphate)lysine.

Belongs to the SHMT family. Pyridoxal 5'-phosphate is required as a cofactor.

The catalysed reaction is uridine-5'-aldehyde + L-threonine = (5'S,6'S)-C-glycyluridine + acetaldehyde. It functions in the pathway antibiotic biosynthesis. In terms of biological role, transaldolase involved in the biosynthesis of the lipopeptidyl nucleoside antibiotic A-90289. Catalyzes the condensation of L-threonine and uridine-5'-aldehyde to form 5'-C-glycyluridine (GlyU). Forms (5'S,6'S)-GlyU. Has no activity with alternative amino acids, such as glycine or serine. The protein is L-threonine:uridine-5'-aldehyde transaldolase of Streptomyces sp.